Consider the following 226-residue polypeptide: Transmembrane gamma-carboxyglutamic acid protein 4 (226 aa).

A signal peptide spans 1–17; it reads MFTLLVLLSQLPTVTLG. A propeptide spanning residues 18–49 is cleaved from the precursor; sequence FPHCARGPKASKHAGEEVFTSKEEANFFIHRR. Residues 50–113 lie on the Extracellular side of the membrane; that stretch reads LLYNRFDLEL…KSDGNREKID (64 aa). In terms of domain architecture, Gla spans 52-98; the sequence is YNRFDLELFTPGNLERECNEELCNYEEAREIFVDEDKTIAFWQEYSA. An intrachain disulfide couples C69 to C74. The residue at position 72 (E72) is a 4-carboxyglutamate. A helical membrane pass occupies residues 114–134; the sequence is VMGLLTGLIAAGVFLVIFGLL. Residues 135-226 lie on the Cytoplasmic side of the membrane; the sequence is GYYLCITKCN…FKKSMSLPSH (92 aa). The residue at position 163 (S163) is a Phosphoserine. Residues 186 to 189 carry the LPXY motif; mediates binding to WW domain-containing proteins motif; sequence LPSY. The short motif at 204-207 is the PPXY motif; mediates binding to WW domain-containing proteins element; it reads PPPY.

It belongs to the commissureless family. In terms of assembly, interacts (via cytoplasmic domain) with WW domain-containing proteins MAGI1, MAGI3, NEDD4, NEDD4L, WWTR1/TAZ and YAP1. In terms of processing, gamma-carboxyglutamate residues are formed by vitamin K dependent carboxylation. These residues are essential for the binding of calcium. Widely expressed with highest levels in kidney.

It is found in the endoplasmic reticulum-Golgi intermediate compartment membrane. Its subcellular location is the cell membrane. Functionally, may control axon guidance across the CNS. Prevents the delivery of ROBO1 at the cell surface and down-regulates its expression. The sequence is that of Transmembrane gamma-carboxyglutamic acid protein 4 from Homo sapiens (Human).